A 194-amino-acid polypeptide reads, in one-letter code: 5'-deoxynucleotidase PBPRA2627 (194 aa).

Substrate-binding positions include 18–19 (RW) and H33. Residues 30 to 142 (ISEHSLQVAF…VKQADSLCAY (113 aa)) enclose the HD domain. A divalent metal cation is bound by residues H33, H68, and D69. Substrate contacts are provided by residues D69, 77 to 80 (DMPT), and D137. D137 provides a ligand contact to a divalent metal cation.

Belongs to the 5DNU family. In terms of assembly, homodimer. A divalent metal cation is required as a cofactor.

Its subcellular location is the cytoplasm. It catalyses the reaction a 2'-deoxyribonucleoside 5'-phosphate + H2O = a 2'-deoxyribonucleoside + phosphate. Catalyzes the strictly specific dephosphorylation of 2'-deoxyribonucleoside 5'-monophosphates. This Photobacterium profundum (strain SS9) protein is 5'-deoxynucleotidase PBPRA2627.